The chain runs to 766 residues: Protein translocase subunit SecA 2 (766 aa).

ATP-binding positions include Gln84, 102-106 (GEGKT), and Asp490.

The protein belongs to the SecA family. Monomer and homodimer. Part of the essential Sec protein translocation apparatus which comprises SecA, SecYEG and auxiliary proteins SecDF. Other proteins may also be involved.

It localises to the cell membrane. It is found in the cytoplasm. The enzyme catalyses ATP + H2O + cellular proteinSide 1 = ADP + phosphate + cellular proteinSide 2.. Functionally, part of the Sec protein translocase complex. Interacts with the SecYEG preprotein conducting channel. Has a central role in coupling the hydrolysis of ATP to the transfer of proteins into and across the cell membrane, serving as an ATP-driven molecular motor driving the stepwise translocation of polypeptide chains across the membrane. This chain is Protein translocase subunit SecA 2, found in Thermobifida fusca (strain YX).